The sequence spans 397 residues: Cathepsin E (397 aa).

A signal peptide spans methionine 1–glycine 20. Positions alanine 21 to glutamate 59 are cleaved as a propeptide — activation peptide. A Peptidase A1 domain is found at tyrosine 79–alanine 393. The N-linked (GlcNAc...) asparagine glycan is linked to asparagine 91. Aspartate 97 is an active-site residue. 2 disulfides stabilise this stretch: cysteine 110/cysteine 115 and cysteine 273/cysteine 277. Aspartate 282 is a catalytic residue. Asparagine 323 carries N-linked (GlcNAc...) asparagine glycosylation.

This sequence belongs to the peptidase A1 family. Homodimer; disulfide-linked. Glycosylated. The nature of the carbohydrate chain varies between cell types. In fibroblasts, the proenzyme contains a high mannose-type oligosaccharide, while the mature enzyme contains a complex-type oligosaccharide. In terms of tissue distribution, expressed abundantly in the stomach, club cells and alveolar macrophages of the lung, brain microglia, spleen and activated B-lymphocytes. Not expressed in resting B-lymphocytes.

It is found in the endosome. It catalyses the reaction Similar to cathepsin D, but slightly broader specificity.. May have a role in immune function. Probably involved in the processing of antigenic peptides during MHC class II-mediated antigen presentation. May play a role in activation-induced lymphocyte depletion in the thymus, and in neuronal degeneration and glial cell activation in the brain. This Mus musculus (Mouse) protein is Cathepsin E (Ctse).